The primary structure comprises 328 residues: Tetraacyldisaccharide 4'-kinase (328 aa).

55–62 (TAGGNGKT) is an ATP binding site.

The protein belongs to the LpxK family.

It carries out the reaction a lipid A disaccharide + ATP = a lipid IVA + ADP + H(+). Its pathway is glycolipid biosynthesis; lipid IV(A) biosynthesis; lipid IV(A) from (3R)-3-hydroxytetradecanoyl-[acyl-carrier-protein] and UDP-N-acetyl-alpha-D-glucosamine: step 6/6. In terms of biological role, transfers the gamma-phosphate of ATP to the 4'-position of a tetraacyldisaccharide 1-phosphate intermediate (termed DS-1-P) to form tetraacyldisaccharide 1,4'-bis-phosphate (lipid IVA). The protein is Tetraacyldisaccharide 4'-kinase of Escherichia coli O127:H6 (strain E2348/69 / EPEC).